A 619-amino-acid chain; its full sequence is ATP-dependent zinc metalloprotease FtsH (619 aa).

Residues 1–5 lie on the Cytoplasmic side of the membrane; it reads MKYFK. Residues 6–26 form a helical membrane-spanning segment; it reads GISFYIIIFILILVIITFFTA. Topologically, residues 27–110 are extracellular; sequence TDNPPKMSYS…VTQPPQPPWW (84 aa). The chain crosses the membrane as a helical span at residues 111–131; sequence VSMLPTVGLVIILILIWFFFI. The Cytoplasmic portion of the chain corresponds to 132 to 619; that stretch reads QQSQGGGGGN…GSSQTPQLEG (488 aa). 204-211 provides a ligand contact to ATP; that stretch reads GPPGTGKT. H426 serves as a coordination point for Zn(2+). E427 is an active-site residue. Zn(2+) contacts are provided by H430 and D502.

It in the central section; belongs to the AAA ATPase family. This sequence in the C-terminal section; belongs to the peptidase M41 family. As to quaternary structure, homohexamer. Requires Zn(2+) as cofactor.

Its subcellular location is the cell membrane. Its function is as follows. Acts as a processive, ATP-dependent zinc metallopeptidase for both cytoplasmic and membrane proteins. Plays a role in the quality control of integral membrane proteins. This chain is ATP-dependent zinc metalloprotease FtsH, found in Ruminiclostridium cellulolyticum (strain ATCC 35319 / DSM 5812 / JCM 6584 / H10) (Clostridium cellulolyticum).